The sequence spans 67 residues: Penaeidin-4c (67 aa).

A signal peptide spans 1 to 19 (MRLVVCLVFLASFALVCQG). 3 disulfides stabilise this stretch: cysteine 42-cysteine 56, cysteine 45-cysteine 63, and cysteine 57-cysteine 64. Residue arginine 66 is modified to Arginine amide.

It belongs to the penaeidin family.

Its subcellular location is the cytoplasmic granule. In terms of biological role, antibacterial and antifungal activity. Presents chitin-binding activity. This chain is Penaeidin-4c, found in Penaeus vannamei (Whiteleg shrimp).